The chain runs to 254 residues: MNRRHRIYEGKAKILYEGPEPGTYIQFFKDDATAFNAKKHEIIDGKGVLNNRISEHIFSHLGRLGIPTHFIKRINMREQLIKAVEIIPLEVVVRNVAAGSLAKRLGLEEGAPLPQSIIEFYYKNDSLDDPMVTEEHITAFGWAVPQEIEDIMQLSIRINDFLSGLFAGVNIQLIDFKMEFGRLWEDETMRIVLADEISPDSARLWDMQTREKMDKDRFRRDMGGLINAYQEVAKRLGIMNENEPIRPSGPVLVK.

It belongs to the SAICAR synthetase family.

It carries out the reaction 5-amino-1-(5-phospho-D-ribosyl)imidazole-4-carboxylate + L-aspartate + ATP = (2S)-2-[5-amino-1-(5-phospho-beta-D-ribosyl)imidazole-4-carboxamido]succinate + ADP + phosphate + 2 H(+). It functions in the pathway purine metabolism; IMP biosynthesis via de novo pathway; 5-amino-1-(5-phospho-D-ribosyl)imidazole-4-carboxamide from 5-amino-1-(5-phospho-D-ribosyl)imidazole-4-carboxylate: step 1/2. This chain is Phosphoribosylaminoimidazole-succinocarboxamide synthase, found in Bartonella tribocorum (strain CIP 105476 / IBS 506).